The chain runs to 492 residues: Catalase isozyme 1 (492 aa).

Residues His65 and Asn138 contribute to the active site. Residue Tyr348 participates in heme binding.

The protein belongs to the catalase family. In terms of assembly, homotetramer. Requires heme as cofactor.

It is found in the peroxisome. The enzyme catalyses 2 H2O2 = O2 + 2 H2O. Functionally, occurs in almost all aerobically respiring organisms and serves to protect cells from the toxic effects of hydrogen peroxide. This chain is Catalase isozyme 1 (CAT1), found in Solanum lycopersicum (Tomato).